Here is a 118-residue protein sequence, read N- to C-terminus: uncharacterized protein (118 aa).

The tract at residues 1–49 is disordered; the sequence is MDYVGGSLKLKNVKKKPLKKKKKDSKKLAEKVQEHSSRDKSPLEENGVS. The span at 11–25 shows a compositional bias: basic residues; that stretch reads KNVKKKPLKKKKKDS. Over residues 26-43 the composition is skewed to basic and acidic residues; the sequence is KKLAEKVQEHSSRDKSPL.

This is an uncharacterized protein from Schizosaccharomyces pombe (strain 972 / ATCC 24843) (Fission yeast).